The chain runs to 206 residues: Uridine kinase (206 aa).

Residue 9 to 16 coordinates ATP; the sequence is GGSGSGKT.

The protein belongs to the uridine kinase family. In terms of assembly, monomer.

Its subcellular location is the cytoplasm. It carries out the reaction uridine + ATP = UMP + ADP + H(+). It catalyses the reaction cytidine + ATP = CMP + ADP + H(+). It participates in pyrimidine metabolism; CTP biosynthesis via salvage pathway; CTP from cytidine: step 1/3. The protein operates within pyrimidine metabolism; UMP biosynthesis via salvage pathway; UMP from uridine: step 1/1. The chain is Uridine kinase (udk) from Borreliella burgdorferi (strain ATCC 35210 / DSM 4680 / CIP 102532 / B31) (Borrelia burgdorferi).